A 209-amino-acid chain; its full sequence is Thymidine kinase (209 aa).

Residues 9 to 16 and 88 to 91 each bind ATP; these read AAMNAGKS and DEAQ. The active-site Proton acceptor is the glutamate 89. The Zn(2+) site is built by cysteine 146, cysteine 148, cysteine 183, and histidine 186.

It belongs to the thymidine kinase family. Homotetramer.

The protein localises to the cytoplasm. It catalyses the reaction thymidine + ATP = dTMP + ADP + H(+). This Legionella pneumophila subsp. pneumophila (strain Philadelphia 1 / ATCC 33152 / DSM 7513) protein is Thymidine kinase.